The sequence spans 1019 residues: Pleckstrin homology domain-containing family M member 2 (1019 aa).

At methionine 1 the chain carries N-acetylmethionine. The interaction with KIF5B stretch occupies residues 1 to 310; the sequence is MEPGEVKDRI…LDPPDACTEL (310 aa). The RUN domain occupies 36-158; that stretch reads RNHDKVLQRL…IRFELDLDAP (123 aa). 3 disordered regions span residues 230–458, 471–525, and 557–581; these read SVPS…SEGL, SPST…REAQ, and QPSPCLSSAEDSGVDEGQGSPSEMV. 2 stretches are compositionally biased toward polar residues: residues 243–272 and 279–291; these read DTVSGPRSTASDLTSSKASTRSPTQRQNPF and TVSSSDTTPVHTT. Over residues 315–327 the composition is skewed to basic residues; that stretch reads VTKKKKIGKKKKS. A compositionally biased stretch (polar residues) spans 417–427; it reads LNGQLDPSTWC. Serine 441 carries the phosphoserine modification. The span at 516-525 shows a compositional bias: basic and acidic residues; sequence PLEDTTREAQ. The interaction with sifA stretch occupies residues 762–885; it reads PCHCSPPEGT…VIPQGVAPSP (124 aa). Residues 771–873 enclose the PH domain; sequence TITKEGMLHY…WMQHLCQAVS (103 aa).

In terms of assembly, interacts with KLC2 (via TPR repeats). Interacts with KIF5B. Interacts with BORCS5. Interacts (via RUN domain) with ARL8B (GTP-bound form); PLEKHM1 and PLEKHM2 compete for interaction with ARL8B. Interacts with ARL8A. As to quaternary structure, (Microbial infection) Interacts with the S.typhimurium sifA protein; required for S.typhimurium infection.

Its subcellular location is the cytoplasm. The protein resides in the lysosome membrane. In terms of biological role, plays a role in lysosomes movement and localization at the cell periphery acting as an effector of ARL8B. Required for ARL8B to exert its effects on lysosome location, recruits kinesin-1 to lysosomes and hence direct their movement toward microtubule plus ends. Binding to ARL8B provides a link from lysosomal membranes to plus-end-directed motility. Critical factor involved in NK cell-mediated cytotoxicity. Drives the polarization of cytolytic granules and microtubule-organizing centers (MTOCs) toward the immune synapse between effector NK lymphocytes and target cells. Required for maintenance of the Golgi apparatus organization. May play a role in membrane tubulation. The sequence is that of Pleckstrin homology domain-containing family M member 2 from Homo sapiens (Human).